Reading from the N-terminus, the 150-residue chain is SsrA-binding protein (150 aa).

The protein belongs to the SmpB family.

The protein resides in the cytoplasm. Functionally, required for rescue of stalled ribosomes mediated by trans-translation. Binds to transfer-messenger RNA (tmRNA), required for stable association of tmRNA with ribosomes. tmRNA and SmpB together mimic tRNA shape, replacing the anticodon stem-loop with SmpB. tmRNA is encoded by the ssrA gene; the 2 termini fold to resemble tRNA(Ala) and it encodes a 'tag peptide', a short internal open reading frame. During trans-translation Ala-aminoacylated tmRNA acts like a tRNA, entering the A-site of stalled ribosomes, displacing the stalled mRNA. The ribosome then switches to translate the ORF on the tmRNA; the nascent peptide is terminated with the 'tag peptide' encoded by the tmRNA and targeted for degradation. The ribosome is freed to recommence translation, which seems to be the essential function of trans-translation. This is SsrA-binding protein from Campylobacter jejuni subsp. jejuni serotype O:6 (strain 81116 / NCTC 11828).